A 1156-amino-acid polypeptide reads, in one-letter code: Nuclear pore-associated protein 1 (1156 aa).

8 disordered regions span residues 1 to 60 (MGNL…RRPS), 155 to 204 (EGPR…FRCS), 219 to 266 (NSMS…PEPA), 481 to 515 (GGSYNSVVGAAPLTSDPPTPPSSTPSFKPPVTRES), 680 to 703 (TLVNSASTASSSKPPIETNAMHTT), 732 to 786 (NTQP…KTSL), 872 to 915 (STSF…SSFI), and 1026 to 1046 (APGPSSTSGELNIGQGQSGTP). A compositionally biased stretch (basic residues) spans 50 to 59 (LFRRNARRRP). Residues 156 to 165 (GPRRVKKDED) show a composition bias toward basic and acidic residues. 2 stretches are compositionally biased toward polar residues: residues 179–197 (PLSSGEASSTSRSQGTQGD) and 219–231 (NSMSEKAQASPAS). Composition is skewed to polar residues over residues 680–692 (TLVNSASTASSSK), 732–750 (NTQPSGNTASVQGSTSLPA), 884–915 (TTTSSHPLNTGSISHSTLGATDGQQKSDSSFI), and 1028–1046 (GPSSTSGELNIGQGQSGTP).

Associates with the nuclear pore complex (NPC). Testis-specific in adults. In fetal brain expressed only from the paternal allele.

The protein localises to the nucleus. Its subcellular location is the nucleoplasm. The protein resides in the nucleus inner membrane. Functionally, may be involved in spermatogenesis. This Homo sapiens (Human) protein is Nuclear pore-associated protein 1 (NPAP1).